Reading from the N-terminus, the 200-residue chain is Glutathione peroxidase 1 (200 aa).

At Ser-31 the chain carries Phosphoserine. Sec-46 is a catalytic residue. A non-standard amino acid (selenocysteine) is located at residue Sec-46. Lys-85 and Lys-111 each carry N6-acetyllysine; alternate. N6-succinyllysine; alternate occurs at positions 85 and 111. Lys-118 is modified (N6-acetyllysine). An N6-acetyllysine; alternate modification is found at Lys-145. Lys-145 carries the post-translational modification N6-succinyllysine; alternate. Phosphoserine is present on Ser-194.

The protein belongs to the glutathione peroxidase family. Homotetramer. Interacts with MIEN1. Post-translationally, during periods of oxidative stress, Sec-46 may react with a superoxide radical, irreversibly lose hydroselenide and be converted to dehydroalanine.

The protein resides in the cytoplasm. The protein localises to the mitochondrion. The catalysed reaction is 2 glutathione + H2O2 = glutathione disulfide + 2 H2O. It catalyses the reaction a hydroperoxy polyunsaturated fatty acid + 2 glutathione = a hydroxy polyunsaturated fatty acid + glutathione disulfide + H2O. It carries out the reaction tert-butyl hydroperoxide + 2 glutathione = tert-butanol + glutathione disulfide + H2O. The enzyme catalyses cumene hydroperoxide + 2 glutathione = 2-phenylpropan-2-ol + glutathione disulfide + H2O. The catalysed reaction is (13S)-hydroperoxy-(9Z,11E)-octadecadienoate + 2 glutathione = (13S)-hydroxy-(9Z,11E)-octadecadienoate + glutathione disulfide + H2O. It catalyses the reaction (9S)-hydroperoxy-(10E,12Z)-octadecadienoate + 2 glutathione = (9S)-hydroxy-(10E,12Z)-octadecadienoate + glutathione disulfide + H2O. It carries out the reaction (5S)-hydroperoxy-(6E,8Z,11Z,14Z)-eicosatetraenoate + 2 glutathione = (5S)-hydroxy-(6E,8Z,11Z,14Z)-eicosatetraenoate + glutathione disulfide + H2O. The enzyme catalyses (12S)-hydroperoxy-(5Z,8Z,10E,14Z)-eicosatetraenoate + 2 glutathione = (12S)-hydroxy-(5Z,8Z,10E,14Z)-eicosatetraenoate + glutathione disulfide + H2O. The catalysed reaction is (12R)-hydroperoxy-(5Z,8Z,10E,14Z)-eicosatetraenoate + 2 glutathione = (12R)-hydroxy-(5Z,8Z,10E,14Z)-eicosatetraenoate + glutathione disulfide + H2O. It catalyses the reaction (15S)-hydroperoxy-(5Z,8Z,11Z,13E)-eicosatetraenoate + 2 glutathione = (15S)-hydroxy-(5Z,8Z,11Z,13E)-eicosatetraenoate + glutathione disulfide + H2O. It carries out the reaction (5S)-hydroperoxy-(6E,8Z,11Z,14Z,17Z)-eicosapentaenoate + 2 glutathione = (5S)-hydroxy-(6E,8Z,11Z,14Z,17Z)-eicosapentaenoate + glutathione disulfide + H2O. The enzyme catalyses (12S)-hydroperoxy-(5Z,8Z,10E,14Z,17Z)-eicosapentaenoate + 2 glutathione = (12S)-hydroxy-(5Z,8Z,10E,14Z,17Z)-eicosapentaenoate + glutathione disulfide + H2O. The catalysed reaction is (15S)-hydroperoxy-(5Z,8Z,11Z,13E,17Z)-eicosapentaenoate + 2 glutathione = (15S)-hydroxy-(5Z,8Z,11Z,13E,17Z)-eicosapentaenoate + glutathione disulfide + H2O. It catalyses the reaction (15S)-hydroperoxy-(11Z,13E)-eicosadienoate + 2 glutathione = (15S)-hydroxy-(11Z,13E)-eicosadienoate + glutathione disulfide + H2O. It carries out the reaction (17S)-hydroperoxy-(4Z,7Z,10Z,13Z,15E,19Z)-docosahexaenoate + 2 glutathione = (17S)-hydroxy-(4Z,7Z,10Z,13Z,15E,19Z)-docosahexaenoate + glutathione disulfide + H2O. Its function is as follows. Catalyzes the reduction of hydroperoxides in a glutathione-dependent manner thus regulating cellular redox homeostasis. Can reduce small soluble hydroperoxides such as H2O2, cumene hydroperoxide and tert-butyl hydroperoxide, as well as several fatty acid-derived hydroperoxides. In platelets catalyzes the reduction of 12-hydroperoxyeicosatetraenoic acid, the primary product of the arachidonate 12-lipoxygenase pathway. The protein is Glutathione peroxidase 1 (GPX1) of Oryctolagus cuniculus (Rabbit).